The primary structure comprises 390 residues: Serpin B3 (390 aa).

Met-1 carries the post-translational modification N-acetylmethionine.

Belongs to the serpin family. Ov-serpin subfamily. As to quaternary structure, interacts with MAPK8/JNK1. In terms of tissue distribution, squamous cells. Expressed in some hepatocellular carcinoma (at protein level).

It localises to the cytoplasm. In terms of biological role, may act as a papain-like cysteine protease inhibitor to modulate the host immune response against tumor cells. Also functions as an inhibitor of UV-induced apoptosis via suppression of the activity of c-Jun NH(2)-terminal kinase (JNK1). The chain is Serpin B3 (SERPINB3) from Homo sapiens (Human).